A 635-amino-acid polypeptide reads, in one-letter code: Threonine--tRNA ligase (635 aa).

Positions 1 to 61 (MIQITLPDNS…DHDARLQIIT (61 aa)) constitute a TGS domain. A catalytic region spans residues 242–533 (DHRKLGKELD…LIEHHAGALP (292 aa)). Zn(2+) is bound by residues cysteine 333, histidine 384, and histidine 510.

The protein belongs to the class-II aminoacyl-tRNA synthetase family. Homodimer. The cofactor is Zn(2+).

The protein localises to the cytoplasm. The enzyme catalyses tRNA(Thr) + L-threonine + ATP = L-threonyl-tRNA(Thr) + AMP + diphosphate + H(+). Its function is as follows. Catalyzes the attachment of threonine to tRNA(Thr) in a two-step reaction: L-threonine is first activated by ATP to form Thr-AMP and then transferred to the acceptor end of tRNA(Thr). Also edits incorrectly charged L-seryl-tRNA(Thr). In Variovorax paradoxus (strain S110), this protein is Threonine--tRNA ligase.